A 141-amino-acid polypeptide reads, in one-letter code: Hemoglobin subunit alpha (141 aa).

The 141-residue stretch at 1–141 (VLSPADKTNI…VSTVLTSKYR (141 aa)) folds into the Globin domain. Residue serine 3 is modified to Phosphoserine. The residue at position 7 (lysine 7) is an N6-succinyllysine. Threonine 8 bears the Phosphothreonine mark. Lysine 11 bears the N6-succinyllysine mark. Lysine 16 carries the N6-acetyllysine; alternate modification. Lysine 16 carries the post-translational modification N6-succinyllysine; alternate. Tyrosine 24 is modified (phosphotyrosine). At serine 35 the chain carries Phosphoserine. Lysine 40 carries the N6-succinyllysine modification. Serine 49 is modified (phosphoserine). Histidine 58 serves as a coordination point for O2. A heme b-binding site is contributed by histidine 87. Position 102 is a phosphoserine (serine 102). Threonine 108 carries the phosphothreonine modification. Serine 124 is modified (phosphoserine). 2 positions are modified to phosphothreonine: threonine 134 and threonine 137. Phosphoserine is present on serine 138.

Belongs to the globin family. As to quaternary structure, heterotetramer of two alpha chains and two beta chains. Red blood cells.

In terms of biological role, involved in oxygen transport from the lung to the various peripheral tissues. Functionally, hemopressin acts as an antagonist peptide of the cannabinoid receptor CNR1. Hemopressin-binding efficiently blocks cannabinoid receptor CNR1 and subsequent signaling. In Canis lupus familiaris (Dog), this protein is Hemoglobin subunit alpha (HBA).